A 189-amino-acid polypeptide reads, in one-letter code: uncharacterized protein (189 aa).

This is an uncharacterized protein from Human adenovirus B serotype 7 (HAdV-7).